Consider the following 145-residue polypeptide: Large ribosomal subunit protein uL11 (145 aa).

Belongs to the universal ribosomal protein uL11 family. Part of the ribosomal stalk of the 50S ribosomal subunit. Interacts with L10 and the large rRNA to form the base of the stalk. L10 forms an elongated spine to which L12 dimers bind in a sequential fashion forming a multimeric L10(L12)X complex. One or more lysine residues are methylated.

Forms part of the ribosomal stalk which helps the ribosome interact with GTP-bound translation factors. The chain is Large ribosomal subunit protein uL11 from Rickettsia massiliae (strain Mtu5).